The primary structure comprises 70 residues: DNA gyrase inhibitor YacG (70 aa).

Positions 7, 10, 26, and 30 each coordinate Zn(2+).

It belongs to the DNA gyrase inhibitor YacG family. In terms of assembly, interacts with GyrB. Zn(2+) serves as cofactor.

Its function is as follows. Inhibits all the catalytic activities of DNA gyrase by preventing its interaction with DNA. Acts by binding directly to the C-terminal domain of GyrB, which probably disrupts DNA binding by the gyrase. The chain is DNA gyrase inhibitor YacG from Shewanella sediminis (strain HAW-EB3).